The following is a 95-amino-acid chain: Large ribosomal subunit protein uL23 (95 aa).

This sequence belongs to the universal ribosomal protein uL23 family. Part of the 50S ribosomal subunit. Contacts protein L29, and trigger factor when it is bound to the ribosome.

In terms of biological role, one of the early assembly proteins it binds 23S rRNA. One of the proteins that surrounds the polypeptide exit tunnel on the outside of the ribosome. Forms the main docking site for trigger factor binding to the ribosome. The sequence is that of Large ribosomal subunit protein uL23 from Pelotomaculum thermopropionicum (strain DSM 13744 / JCM 10971 / SI).